The sequence spans 117 residues: Movement and RNA silencing protein (117 aa).

A helical transmembrane segment spans residues 15-35; it reads FLFFGAIFIAITILYILLVLL. The tract at residues 83-117 is disordered; sequence RDQEPAVIPHVSQVIPSQPNRRDDQGRRGNAGPMF.

It localises to the host cell membrane. Functionally, transports viral genome to neighboring plant cells directly through plasmosdesmata, without any budding. The movement protein allows efficient cell to cell propagation, by bypassing the host cell wall barrier. Begomovirus genome is shuttled out of nucleus by Nuclear shuttle protein (NSP) and the movement protein transports the DNA-NSP complex to cell plasmodesmata and facilitates further movement across the cell wall. Acts as a suppressor of RNA-mediated gene silencing, also known as post-transcriptional gene silencing (PTGS), a mechanism of plant viral defense that limits the accumulation of viral RNAs. The sequence is that of Movement and RNA silencing protein (DNA-M) from Banana bunchy top virus (isolate Autralia) (BBTV).